Consider the following 944-residue polypeptide: Protocadherin gamma-C5 (944 aa).

The first 29 residues, methionine 1–glycine 29, serve as a signal peptide directing secretion. Cadherin domains follow at residues glutamine 30–phenylalanine 133, alanine 134–phenylalanine 242, glutamine 243–valine 350, leucine 351–phenylalanine 454, asparagine 455–valine 564, and tryptophan 571–serine 677. Residues glutamine 30–tyrosine 693 lie on the Extracellular side of the membrane. Asparagine 265, asparagine 443, and asparagine 547 each carry an N-linked (GlcNAc...) asparagine glycan. The chain crosses the membrane as a helical span at residues leucine 694–alanine 714. Over lysine 715–lysine 944 the chain is Cytoplasmic. Disordered regions lie at residues aspartate 722–proline 747, serine 812–asparagine 853, and alanine 914–lysine 944. The segment covering glutamine 820–asparagine 853 has biased composition (polar residues). Residues asparagine 934 to lysine 944 show a composition bias toward basic residues.

It is found in the cell membrane. In terms of biological role, potential calcium-dependent cell-adhesion protein. May be involved in the establishment and maintenance of specific neuronal connections in the brain. This chain is Protocadherin gamma-C5 (PCDHGC5), found in Homo sapiens (Human).